Consider the following 426-residue polypeptide: Glutamate/glutamine/aspartate/asparagine transport system permease protein BztB (426 aa).

8 helical membrane passes run 25 to 45 (SITIQIVVLLLFLAGLVWLLN), 96 to 116 (LLVSVLGCILATILGTIIGVL), 132 to 152 (VETFRNIPLLLWILLMGTILA), 211 to 231 (LPVSLNALAILAVMSASFWGW), 252 to 272 (WWPSLLILFAPISALLYGLGF), 293 to 313 (SFTALLIALTLYTAAFIAEIV), 340 to 360 (SLVILPQALRVIVPPLISQFL), and 396 to 416 (MLLMMLIYLTISLTISSLMNL). In terms of domain architecture, ABC transmembrane type-1 spans 92-414 (LLNTLLVSVL…TISLTISSLM (323 aa)).

It belongs to the binding-protein-dependent transport system permease family. HisMQ subfamily. As to quaternary structure, bztB and BztC form a heterodimer which can form a membrane complex with a homodimer of BztD.

It is found in the cell inner membrane. Its function is as follows. Part of a binding-protein-dependent transport system for glutamate, glutamine, aspartate and asparagine. Probably responsible for the translocation of the substrate across the membrane. This chain is Glutamate/glutamine/aspartate/asparagine transport system permease protein BztB (bztB), found in Rhodobacter capsulatus (strain ATCC BAA-309 / NBRC 16581 / SB1003).